A 73-amino-acid polypeptide reads, in one-letter code: Large ribosomal subunit protein bL31 (73 aa).

The segment covering 34 to 43 has biased composition (basic and acidic residues); it reads KMNLDIDPKS. The segment at 34–54 is disordered; it reads KMNLDIDPKSHPAWTGGTQQM.

Belongs to the bacterial ribosomal protein bL31 family. Type A subfamily. As to quaternary structure, part of the 50S ribosomal subunit.

Functionally, binds the 23S rRNA. This chain is Large ribosomal subunit protein bL31, found in Rhodopseudomonas palustris (strain BisA53).